The primary structure comprises 41 residues: Photosystem I reaction center subunit IX (41 aa).

A helical membrane pass occupies residues 7–27; it reads YLSTAPVVALIWFTFTAGLLI.

The protein belongs to the PsaJ family.

The protein localises to the plastid. Its subcellular location is the chloroplast thylakoid membrane. Functionally, may help in the organization of the PsaE and PsaF subunits. In Pleurastrum terricola (Filamentous green alga), this protein is Photosystem I reaction center subunit IX.